Reading from the N-terminus, the 347-residue chain is 3-isopropylmalate dehydrogenase (347 aa).

Residues R95, R105, R129, and D220 each contribute to the substrate site. Residues D220, D244, and D248 each coordinate Mg(2+). 280–292 lines the NAD(+) pocket; sequence GSAPDIAGQGKAD.

This sequence belongs to the isocitrate and isopropylmalate dehydrogenases family. LeuB type 2 subfamily. As to quaternary structure, homodimer. It depends on Mg(2+) as a cofactor. The cofactor is Mn(2+).

The protein localises to the cytoplasm. It carries out the reaction (2R,3S)-3-isopropylmalate + NAD(+) = 4-methyl-2-oxopentanoate + CO2 + NADH. The protein operates within amino-acid biosynthesis; L-leucine biosynthesis; L-leucine from 3-methyl-2-oxobutanoate: step 3/4. In terms of biological role, catalyzes the oxidation of 3-carboxy-2-hydroxy-4-methylpentanoate (3-isopropylmalate) to 3-carboxy-4-methyl-2-oxopentanoate. The product decarboxylates to 4-methyl-2 oxopentanoate. In Beutenbergia cavernae (strain ATCC BAA-8 / DSM 12333 / CCUG 43141 / JCM 11478 / NBRC 16432 / NCIMB 13614 / HKI 0122), this protein is 3-isopropylmalate dehydrogenase.